A 211-amino-acid polypeptide reads, in one-letter code: Ribonuclease T (211 aa).

The 175-residue stretch at Val24–Phe198 folds into the Exonuclease domain. Residues Asp27, Glu29, His185, and Asp190 each coordinate Mg(2+). The Proton donor/acceptor role is filled by His185.

This sequence belongs to the RNase T family. Homodimer. Mg(2+) is required as a cofactor.

Its function is as follows. Trims short 3' overhangs of a variety of RNA species, leaving a one or two nucleotide 3' overhang. Responsible for the end-turnover of tRNA: specifically removes the terminal AMP residue from uncharged tRNA (tRNA-C-C-A). Also appears to be involved in tRNA biosynthesis. The polypeptide is Ribonuclease T (Xylella fastidiosa (strain Temecula1 / ATCC 700964)).